The primary structure comprises 241 residues: Ribosomal RNA small subunit methyltransferase G (241 aa).

S-adenosyl-L-methionine-binding positions include Gly-79, Phe-84, 130-131, and Arg-150; that span reads AE.

It belongs to the methyltransferase superfamily. RNA methyltransferase RsmG family.

The protein resides in the cytoplasm. Functionally, specifically methylates the N7 position of a guanine in 16S rRNA. The polypeptide is Ribosomal RNA small subunit methyltransferase G (Ligilactobacillus salivarius (strain UCC118) (Lactobacillus salivarius)).